The primary structure comprises 119 residues: Ribosome-binding factor A (119 aa).

Belongs to the RbfA family. In terms of assembly, monomer. Binds 30S ribosomal subunits, but not 50S ribosomal subunits or 70S ribosomes.

The protein localises to the cytoplasm. In terms of biological role, one of several proteins that assist in the late maturation steps of the functional core of the 30S ribosomal subunit. Associates with free 30S ribosomal subunits (but not with 30S subunits that are part of 70S ribosomes or polysomes). Required for efficient processing of 16S rRNA. May interact with the 5'-terminal helix region of 16S rRNA. The protein is Ribosome-binding factor A of Wolinella succinogenes (strain ATCC 29543 / DSM 1740 / CCUG 13145 / JCM 31913 / LMG 7466 / NCTC 11488 / FDC 602W) (Vibrio succinogenes).